The following is a 159-amino-acid chain: Ribosomal RNA large subunit methyltransferase H (159 aa).

S-adenosyl-L-methionine is bound by residues Leu-76, Gly-108, and 127–132 (FSKMTF).

It belongs to the RNA methyltransferase RlmH family. As to quaternary structure, homodimer.

It localises to the cytoplasm. The enzyme catalyses pseudouridine(1915) in 23S rRNA + S-adenosyl-L-methionine = N(3)-methylpseudouridine(1915) in 23S rRNA + S-adenosyl-L-homocysteine + H(+). Its function is as follows. Specifically methylates the pseudouridine at position 1915 (m3Psi1915) in 23S rRNA. The protein is Ribosomal RNA large subunit methyltransferase H of Geobacillus sp. (strain WCH70).